A 253-amino-acid chain; its full sequence is uncharacterized protein (253 aa).

The interval 211–235 (DEPEPAQPTLTVPSAQPVSNRRGKP) is disordered. The span at 218-229 (PTLTVPSAQPVS) shows a compositional bias: polar residues.

This is an uncharacterized protein from Mycobacterium tuberculosis (strain CDC 1551 / Oshkosh).